Reading from the N-terminus, the 364-residue chain is Chorismate synthase (364 aa).

Arg48 contributes to the NADP(+) binding site. FMN is bound by residues 131–133 (RSS), 243–244 (NA), Gly288, 303–307 (KPTSS), and Arg329.

The protein belongs to the chorismate synthase family. As to quaternary structure, homotetramer. FMNH2 serves as cofactor.

The catalysed reaction is 5-O-(1-carboxyvinyl)-3-phosphoshikimate = chorismate + phosphate. It functions in the pathway metabolic intermediate biosynthesis; chorismate biosynthesis; chorismate from D-erythrose 4-phosphate and phosphoenolpyruvate: step 7/7. Its function is as follows. Catalyzes the anti-1,4-elimination of the C-3 phosphate and the C-6 proR hydrogen from 5-enolpyruvylshikimate-3-phosphate (EPSP) to yield chorismate, which is the branch point compound that serves as the starting substrate for the three terminal pathways of aromatic amino acid biosynthesis. This reaction introduces a second double bond into the aromatic ring system. The sequence is that of Chorismate synthase from Brucella abortus (strain S19).